An 85-amino-acid chain; its full sequence is Makatoxin-3 (85 aa).

A signal peptide spans 1 to 19 (MNYLIVISFALLLMTGVES). Residues 21-83 (RDAYIAKKEN…VPIRIPGPCI (63 aa)) form the LCN-type CS-alpha/beta domain. 4 cysteine pairs are disulfide-bonded: Cys31–Cys82, Cys35–Cys55, Cys41–Cys65, and Cys45–Cys67.

The protein belongs to the long (4 C-C) scorpion toxin superfamily. Sodium channel inhibitor family. Alpha subfamily. In terms of tissue distribution, expressed by the venom gland.

The protein localises to the secreted. Its function is as follows. This protein markedly relaxes the rat carbachol-precontracted anococcygeus muscle. This relaxation is inhibited by the inhibitor of nitric oxide (NO) synthase, N-nitro-L-arginine methyl ester (L-NAME), suggesting that the response induced by this protein is NO-mediated. The sequence is that of Makatoxin-3 from Olivierus martensii (Manchurian scorpion).